The following is an 864-amino-acid chain: DNA mismatch repair protein MutS (864 aa).

Residue 607-614 participates in ATP binding; the sequence is GPNMGGKS.

Belongs to the DNA mismatch repair MutS family.

Functionally, this protein is involved in the repair of mismatches in DNA. It is possible that it carries out the mismatch recognition step. This protein has a weak ATPase activity. The chain is DNA mismatch repair protein MutS from Neisseria gonorrhoeae (strain NCCP11945).